A 395-amino-acid polypeptide reads, in one-letter code: Flap endonuclease 1 (395 aa).

Residues 1–108 are N-domain; it reads MGILGLSKLL…DELEMRRQKA (108 aa). Residue Asp34 participates in Mg(2+) binding. Residue Arg74 participates in DNA binding. Mg(2+)-binding residues include Asp90, Glu162, Glu164, Asp183, and Asp185. The I-domain stretch occupies residues 126-257; sequence MMEKMSKRTV…QKAWEGIQRY (132 aa). Glu162 is a DNA binding site. DNA contacts are provided by Gly235 and Asp237. Asp237 serves as a coordination point for Mg(2+). Positions 340 to 348 are interaction with PCNA; that stretch reads TQGRLDSFF.

This sequence belongs to the XPG/RAD2 endonuclease family. FEN1 subfamily. Interacts with PCNA. Three molecules of FEN1 bind to one PCNA trimer with each molecule binding to one PCNA monomer. PCNA stimulates the nuclease activity without altering cleavage specificity. It depends on Mg(2+) as a cofactor. Phosphorylated. Phosphorylation upon DNA damage induces relocalization to the nuclear plasma.

The protein resides in the nucleus. It is found in the nucleolus. It localises to the nucleoplasm. The protein localises to the mitochondrion. Functionally, structure-specific nuclease with 5'-flap endonuclease and 5'-3' exonuclease activities involved in DNA replication and repair. During DNA replication, cleaves the 5'-overhanging flap structure that is generated by displacement synthesis when DNA polymerase encounters the 5'-end of a downstream Okazaki fragment. It enters the flap from the 5'-end and then tracks to cleave the flap base, leaving a nick for ligation. Also involved in the long patch base excision repair (LP-BER) pathway, by cleaving within the apurinic/apyrimidinic (AP) site-terminated flap. Acts as a genome stabilization factor that prevents flaps from equilibrating into structures that lead to duplications and deletions. Also possesses 5'-3' exonuclease activity on nicked or gapped double-stranded DNA, and exhibits RNase H activity. Also involved in replication and repair of rDNA and in repairing mitochondrial DNA. This Leishmania infantum protein is Flap endonuclease 1.